A 172-amino-acid polypeptide reads, in one-letter code: L-2,4-diaminobutyric acid acetyltransferase (172 aa).

The 152-residue stretch at 15-166 folds into the N-acetyltransferase domain; sequence IVFDKPTVED…DEHEEELTFR (152 aa).

Belongs to the acetyltransferase family. EctA subfamily.

The catalysed reaction is L-2,4-diaminobutanoate + acetyl-CoA = (2S)-4-acetamido-2-aminobutanoate + CoA + H(+). It participates in amine and polyamine biosynthesis; ectoine biosynthesis; L-ectoine from L-aspartate 4-semialdehyde: step 2/3. Functionally, catalyzes the acetylation of L-2,4-diaminobutyrate (DABA) to gamma-N-acetyl-alpha,gamma-diaminobutyric acid (ADABA) with acetyl coenzyme A. The polypeptide is L-2,4-diaminobutyric acid acetyltransferase (ectA) (Marinococcus halophilus).